We begin with the raw amino-acid sequence, 195 residues long: Imidazoleglycerol-phosphate dehydratase (195 aa).

Belongs to the imidazoleglycerol-phosphate dehydratase family.

It is found in the cytoplasm. It carries out the reaction D-erythro-1-(imidazol-4-yl)glycerol 3-phosphate = 3-(imidazol-4-yl)-2-oxopropyl phosphate + H2O. It functions in the pathway amino-acid biosynthesis; L-histidine biosynthesis; L-histidine from 5-phospho-alpha-D-ribose 1-diphosphate: step 6/9. The sequence is that of Imidazoleglycerol-phosphate dehydratase from Burkholderia cenocepacia (strain ATCC BAA-245 / DSM 16553 / LMG 16656 / NCTC 13227 / J2315 / CF5610) (Burkholderia cepacia (strain J2315)).